A 459-amino-acid chain; its full sequence is Bifunctional protein GlmU (459 aa).

The interval 1–229 (MTNYAIILAA…FDESLGVNDR (229 aa)) is pyrophosphorylase. Residues 8–11 (LAAG), K22, Q72, and 77–78 (GT) contribute to the UDP-N-acetyl-alpha-D-glucosamine site. D102 serves as a coordination point for Mg(2+). G139, E154, N169, and N227 together coordinate UDP-N-acetyl-alpha-D-glucosamine. N227 lines the Mg(2+) pocket. Positions 230 to 250 (VALATAESVMRRRINQKHMVN) are linker. The N-acetyltransferase stretch occupies residues 251–459 (GVSFVNPDAT…KRLPHHPQNK (209 aa)). UDP-N-acetyl-alpha-D-glucosamine is bound by residues R332 and K350. H362 acts as the Proton acceptor in catalysis. Y365 and N376 together coordinate UDP-N-acetyl-alpha-D-glucosamine. Residues A379, 385–386 (NY), S404, A422, and R439 contribute to the acetyl-CoA site.

This sequence in the N-terminal section; belongs to the N-acetylglucosamine-1-phosphate uridyltransferase family. The protein in the C-terminal section; belongs to the transferase hexapeptide repeat family. In terms of assembly, homotrimer. Requires Mg(2+) as cofactor.

It localises to the cytoplasm. It carries out the reaction alpha-D-glucosamine 1-phosphate + acetyl-CoA = N-acetyl-alpha-D-glucosamine 1-phosphate + CoA + H(+). The enzyme catalyses N-acetyl-alpha-D-glucosamine 1-phosphate + UTP + H(+) = UDP-N-acetyl-alpha-D-glucosamine + diphosphate. The protein operates within nucleotide-sugar biosynthesis; UDP-N-acetyl-alpha-D-glucosamine biosynthesis; N-acetyl-alpha-D-glucosamine 1-phosphate from alpha-D-glucosamine 6-phosphate (route II): step 2/2. It participates in nucleotide-sugar biosynthesis; UDP-N-acetyl-alpha-D-glucosamine biosynthesis; UDP-N-acetyl-alpha-D-glucosamine from N-acetyl-alpha-D-glucosamine 1-phosphate: step 1/1. It functions in the pathway bacterial outer membrane biogenesis; LPS lipid A biosynthesis. Its function is as follows. Catalyzes the last two sequential reactions in the de novo biosynthetic pathway for UDP-N-acetylglucosamine (UDP-GlcNAc). The C-terminal domain catalyzes the transfer of acetyl group from acetyl coenzyme A to glucosamine-1-phosphate (GlcN-1-P) to produce N-acetylglucosamine-1-phosphate (GlcNAc-1-P), which is converted into UDP-GlcNAc by the transfer of uridine 5-monophosphate (from uridine 5-triphosphate), a reaction catalyzed by the N-terminal domain. This is Bifunctional protein GlmU from Streptococcus gordonii (strain Challis / ATCC 35105 / BCRC 15272 / CH1 / DL1 / V288).